Reading from the N-terminus, the 628-residue chain is Beta-lactamase-like protein 1 (628 aa).

Residues 1 to 28 form the signal peptide; it reads MKNILSFSFSFSFLYILFLLLFLNNNLL. N-linked (GlcNAc...) asparagine glycans are attached at residues N45, N68, N198, and N241. Residues 245 to 281 are compositionally biased toward low complexity; that stretch reads NNNNNNNNNNNNNNNNNNNNNNNNNNNNNNNNNNNNN. Residues 245 to 285 form a disordered region; it reads NNNNNNNNNNNNNNNNNNNNNNNNNNNNNNNNNNNNNKIKT. 2 N-linked (GlcNAc...) asparagine glycosylation sites follow: N313 and N335. Residues 494–516 form a disordered region; sequence EKEEKEEEEENQQDESQQQQQQQ. Residues 496–506 are compositionally biased toward acidic residues; the sequence is EEKEEEEENQQ. Low complexity predominate over residues 507–516; the sequence is DESQQQQQQQ.

Belongs to the beta-lactamase family.

Its subcellular location is the secreted. This is Beta-lactamase-like protein 1 from Dictyostelium discoideum (Social amoeba).